We begin with the raw amino-acid sequence, 143 residues long: Monothiol glutaredoxin-5, mitochondrial (143 aa).

The transit peptide at 1-28 (MFGRISTRALLRPAFTHRIPSVSLSRFL) directs the protein to the mitochondrion. The Glutaredoxin domain occupies 33–138 (KQAIESAIES…KLLEDADALV (106 aa)). K50 is a glutathione binding site. C58 provides a ligand contact to [2Fe-2S] cluster. Glutathione-binding positions include 90 to 94 (REGVK), I102, and 115 to 116 (CD).

The protein belongs to the glutaredoxin family. Monothiol subfamily. Homodimer.

It is found in the mitochondrion matrix. Functionally, monothiol glutaredoxin involved in mitochondrial iron-sulfur (Fe/S) cluster transfer. Receives iron-sulfur clusters from scaffold protein ISU1 and mediates their transfer to apoproteins, to the 4Fe/FS cluster biosynthesis machinery, or export from mitochondrion. The protein is Monothiol glutaredoxin-5, mitochondrial (GRX5) of Lachancea kluyveri (Yeast).